The sequence spans 397 residues: CCA-adding enzyme (397 aa).

ATP is bound by residues glycine 26 and arginine 29. Residues glycine 26 and arginine 29 each coordinate CTP. Aspartate 39 and aspartate 41 together coordinate Mg(2+). 5 residues coordinate ATP: arginine 110, aspartate 153, arginine 156, arginine 159, and arginine 162. Residues arginine 110, aspartate 153, arginine 156, arginine 159, and arginine 162 each contribute to the CTP site.

It belongs to the tRNA nucleotidyltransferase/poly(A) polymerase family. Bacterial CCA-adding enzyme type 3 subfamily. In terms of assembly, homodimer. It depends on Mg(2+) as a cofactor.

It carries out the reaction a tRNA precursor + 2 CTP + ATP = a tRNA with a 3' CCA end + 3 diphosphate. It catalyses the reaction a tRNA with a 3' CCA end + 2 CTP + ATP = a tRNA with a 3' CCACCA end + 3 diphosphate. Catalyzes the addition and repair of the essential 3'-terminal CCA sequence in tRNAs without using a nucleic acid template. Adds these three nucleotides in the order of C, C, and A to the tRNA nucleotide-73, using CTP and ATP as substrates and producing inorganic pyrophosphate. tRNA 3'-terminal CCA addition is required both for tRNA processing and repair. Also involved in tRNA surveillance by mediating tandem CCA addition to generate a CCACCA at the 3' terminus of unstable tRNAs. While stable tRNAs receive only 3'-terminal CCA, unstable tRNAs are marked with CCACCA and rapidly degraded. The chain is CCA-adding enzyme from Bacillus cereus (strain Q1).